Consider the following 196-residue polypeptide: Probable histone chaperone ASF1A (196 aa).

Positions 146–157 (VTKFPIDFHPEE) are enriched in basic and acidic residues. The tract at residues 146–196 (VTKFPIDFHPEEEQTAATAAPPEQSDEQQPNVNGEAQVLPDQSVEPKPEES) is disordered.

Belongs to the ASF1 family. As to quaternary structure, interacts with histone H3 and histone H4. Component of the HIRA complex made of UBN1, UBN2, ASF1A, CABIN1 and HIRA. Interacts with HIRA. In terms of tissue distribution, expressed in leaves and flower buds.

The protein localises to the nucleus. It is found in the nucleolus. In terms of biological role, histone chaperone that facilitates histone deposition and histone exchange and removal during nucleosome assembly and disassembly. While encoded by a region of the Arabidopsis thaliana genome that is homologous to the Brassica S-locus for self incompatibility, this protein may not play the same role in Arabidopsis thaliana. This Arabidopsis thaliana (Mouse-ear cress) protein is Probable histone chaperone ASF1A (ASF1A).